Consider the following 86-residue polypeptide: Large ribosomal subunit protein bL27 (86 aa).

The tract at residues 1 to 24 (MAHKKAGGSTRNGRDSESKRLGVK) is disordered.

This sequence belongs to the bacterial ribosomal protein bL27 family.

The sequence is that of Large ribosomal subunit protein bL27 from Alcanivorax borkumensis (strain ATCC 700651 / DSM 11573 / NCIMB 13689 / SK2).